Consider the following 254-residue polypeptide: Alcohol dehydrogenase (254 aa).

10 to 33 is a binding site for NAD(+); it reads FVAGLGGIGLDTSKGIVKAGPKNL. A substrate-binding site is contributed by S138. Catalysis depends on Y151, which acts as the Proton acceptor.

This sequence belongs to the short-chain dehydrogenases/reductases (SDR) family. As to quaternary structure, homodimer.

The enzyme catalyses a primary alcohol + NAD(+) = an aldehyde + NADH + H(+). The catalysed reaction is a secondary alcohol + NAD(+) = a ketone + NADH + H(+). The polypeptide is Alcohol dehydrogenase (Adh) (Drosophila immigrans (Fruit fly)).